Consider the following 252-residue polypeptide: Pyridoxine 5'-phosphate synthase (252 aa).

N12 is a 3-amino-2-oxopropyl phosphate binding site. 14 to 15 (DH) is a 1-deoxy-D-xylulose 5-phosphate binding site. R23 contacts 3-amino-2-oxopropyl phosphate. H48 (proton acceptor) is an active-site residue. Residues R50 and H55 each contribute to the 1-deoxy-D-xylulose 5-phosphate site. E75 acts as the Proton acceptor in catalysis. T105 provides a ligand contact to 1-deoxy-D-xylulose 5-phosphate. H199 functions as the Proton donor in the catalytic mechanism. Residues G200 and 221–222 (GH) contribute to the 3-amino-2-oxopropyl phosphate site.

It belongs to the PNP synthase family. Homooctamer; tetramer of dimers.

The protein localises to the cytoplasm. The catalysed reaction is 3-amino-2-oxopropyl phosphate + 1-deoxy-D-xylulose 5-phosphate = pyridoxine 5'-phosphate + phosphate + 2 H2O + H(+). Its pathway is cofactor biosynthesis; pyridoxine 5'-phosphate biosynthesis; pyridoxine 5'-phosphate from D-erythrose 4-phosphate: step 5/5. Catalyzes the complicated ring closure reaction between the two acyclic compounds 1-deoxy-D-xylulose-5-phosphate (DXP) and 3-amino-2-oxopropyl phosphate (1-amino-acetone-3-phosphate or AAP) to form pyridoxine 5'-phosphate (PNP) and inorganic phosphate. In Cereibacter sphaeroides (strain ATCC 17029 / ATH 2.4.9) (Rhodobacter sphaeroides), this protein is Pyridoxine 5'-phosphate synthase.